The following is a 232-amino-acid chain: Phosphatidylserine decarboxylase proenzyme (232 aa).

Serine 190 functions as the Schiff-base intermediate with substrate; via pyruvic acid in the catalytic mechanism. Serine 190 carries the post-translational modification Pyruvic acid (Ser); by autocatalysis.

Belongs to the phosphatidylserine decarboxylase family. PSD-A subfamily. In terms of assembly, heterodimer of a large membrane-associated beta subunit and a small pyruvoyl-containing alpha subunit. Pyruvate is required as a cofactor. In terms of processing, is synthesized initially as an inactive proenzyme. Formation of the active enzyme involves a self-maturation process in which the active site pyruvoyl group is generated from an internal serine residue via an autocatalytic post-translational modification. Two non-identical subunits are generated from the proenzyme in this reaction, and the pyruvate is formed at the N-terminus of the alpha chain, which is derived from the carboxyl end of the proenzyme. The post-translation cleavage follows an unusual pathway, termed non-hydrolytic serinolysis, in which the side chain hydroxyl group of the serine supplies its oxygen atom to form the C-terminus of the beta chain, while the remainder of the serine residue undergoes an oxidative deamination to produce ammonia and the pyruvoyl prosthetic group on the alpha chain.

The protein localises to the cell membrane. It catalyses the reaction a 1,2-diacyl-sn-glycero-3-phospho-L-serine + H(+) = a 1,2-diacyl-sn-glycero-3-phosphoethanolamine + CO2. Its pathway is phospholipid metabolism; phosphatidylethanolamine biosynthesis; phosphatidylethanolamine from CDP-diacylglycerol: step 2/2. Functionally, catalyzes the formation of phosphatidylethanolamine (PtdEtn) from phosphatidylserine (PtdSer). The sequence is that of Phosphatidylserine decarboxylase proenzyme from Bradyrhizobium sp. (strain ORS 278).